The primary structure comprises 475 residues: Ribulose bisphosphate carboxylase large chain (475 aa).

Residues 1–2 (MS) constitute a propeptide that is removed on maturation. Pro-3 bears the N-acetylproline mark. Lys-14 is modified (N6,N6,N6-trimethyllysine). Substrate-binding residues include Asn-123 and Thr-173. Lys-175 acts as the Proton acceptor in catalysis. Substrate is bound at residue Lys-177. Positions 201, 203, and 204 each coordinate Mg(2+). Lys-201 carries the N6-carboxylysine modification. The active-site Proton acceptor is His-294. Residues Arg-295, His-327, and Ser-379 each coordinate substrate.

It belongs to the RuBisCO large chain family. Type I subfamily. In terms of assembly, heterohexadecamer of 8 large chains and 8 small chains; disulfide-linked. The disulfide link is formed within the large subunit homodimers. The cofactor is Mg(2+). Post-translationally, the disulfide bond which can form in the large chain dimeric partners within the hexadecamer appears to be associated with oxidative stress and protein turnover.

It is found in the plastid. The protein resides in the chloroplast. The catalysed reaction is 2 (2R)-3-phosphoglycerate + 2 H(+) = D-ribulose 1,5-bisphosphate + CO2 + H2O. The enzyme catalyses D-ribulose 1,5-bisphosphate + O2 = 2-phosphoglycolate + (2R)-3-phosphoglycerate + 2 H(+). Its function is as follows. RuBisCO catalyzes two reactions: the carboxylation of D-ribulose 1,5-bisphosphate, the primary event in carbon dioxide fixation, as well as the oxidative fragmentation of the pentose substrate in the photorespiration process. Both reactions occur simultaneously and in competition at the same active site. This chain is Ribulose bisphosphate carboxylase large chain, found in Pseudolarix amabilis (Golden larch).